The primary structure comprises 375 residues: Chaperone protein DnaJ (375 aa).

The J domain maps to 4–69 (DLYETLGVQK…QKRAAYDRYG (66 aa)). Residues 133 to 211 (GKTAQIRVPT…CHGQGRVVEE (79 aa)) form a CR-type zinc finger. Residues cysteine 146, cysteine 149, cysteine 163, cysteine 166, cysteine 185, cysteine 188, cysteine 199, and cysteine 202 each coordinate Zn(2+). CXXCXGXG motif repeat units lie at residues 146–153 (CDVCTGTG), 163–170 (CGTCQGTG), 185–192 (CPTCGGRG), and 199–206 (CTKCHGQG).

Belongs to the DnaJ family. In terms of assembly, homodimer. Requires Zn(2+) as cofactor.

It localises to the cytoplasm. Its function is as follows. Participates actively in the response to hyperosmotic and heat shock by preventing the aggregation of stress-denatured proteins and by disaggregating proteins, also in an autonomous, DnaK-independent fashion. Unfolded proteins bind initially to DnaJ; upon interaction with the DnaJ-bound protein, DnaK hydrolyzes its bound ATP, resulting in the formation of a stable complex. GrpE releases ADP from DnaK; ATP binding to DnaK triggers the release of the substrate protein, thus completing the reaction cycle. Several rounds of ATP-dependent interactions between DnaJ, DnaK and GrpE are required for fully efficient folding. Also involved, together with DnaK and GrpE, in the DNA replication of plasmids through activation of initiation proteins. This is Chaperone protein DnaJ from Sinorhizobium medicae (strain WSM419) (Ensifer medicae).